The following is a 391-amino-acid chain: Ferrochelatase (391 aa).

Positions 196 and 281 each coordinate Fe cation.

The protein belongs to the ferrochelatase family.

The protein resides in the cytoplasm. It catalyses the reaction heme b + 2 H(+) = protoporphyrin IX + Fe(2+). It participates in porphyrin-containing compound metabolism; protoheme biosynthesis; protoheme from protoporphyrin-IX: step 1/1. Its function is as follows. Catalyzes the ferrous insertion into protoporphyrin IX. This Prochlorococcus marinus (strain MIT 9215) protein is Ferrochelatase.